A 69-amino-acid chain; its full sequence is Cytochrome c oxidase subunit 8A, mitochondrial (69 aa).

The N-terminal 25 residues, 1-25, are a transit peptide targeting the mitochondrion; the sequence is MSVLTPLLLRGLAGSARRLPVPRAQ. Positions 2–19 match the SIFI-degron motif; sequence SVLTPLLLRGLAGSARRL. Over 26–36 the chain is Mitochondrial matrix; that stretch reads IHSKPPREQLG. The chain crosses the membrane as a helical span at residues 37-60; that stretch reads TMDVAIGITSCFLCFLLPAGWVLS. Residues 61-69 are Mitochondrial intermembrane-facing; that stretch reads HLESYKKRE.

The protein belongs to the cytochrome c oxidase VIII family. As to quaternary structure, component of the cytochrome c oxidase (complex IV, CIV), a multisubunit enzyme composed of 14 subunits. The complex is composed of a catalytic core of 3 subunits MT-CO1, MT-CO2 and MT-CO3, encoded in the mitochondrial DNA, and 11 supernumerary subunits COX4I, COX5A, COX5B, COX6A, COX6B, COX6C, COX7A, COX7B, COX7C, COX8 and NDUFA4, which are encoded in the nuclear genome. The complex exists as a monomer or a dimer and forms supercomplexes (SCs) in the inner mitochondrial membrane with NADH-ubiquinone oxidoreductase (complex I, CI) and ubiquinol-cytochrome c oxidoreductase (cytochrome b-c1 complex, complex III, CIII), resulting in different assemblies (supercomplex SCI(1)III(2)IV(1) and megacomplex MCI(2)III(2)IV(2)). In response to mitochondrial stress, the precursor protein is ubiquitinated by the SIFI complex in the cytoplasm before mitochondrial import, leading to its degradation. Within the SIFI complex, UBR4 initiates ubiquitin chain that are further elongated or branched by KCMF1.

The protein localises to the mitochondrion inner membrane. The protein operates within energy metabolism; oxidative phosphorylation. Its function is as follows. Component of the cytochrome c oxidase, the last enzyme in the mitochondrial electron transport chain which drives oxidative phosphorylation. The respiratory chain contains 3 multisubunit complexes succinate dehydrogenase (complex II, CII), ubiquinol-cytochrome c oxidoreductase (cytochrome b-c1 complex, complex III, CIII) and cytochrome c oxidase (complex IV, CIV), that cooperate to transfer electrons derived from NADH and succinate to molecular oxygen, creating an electrochemical gradient over the inner membrane that drives transmembrane transport and the ATP synthase. Cytochrome c oxidase is the component of the respiratory chain that catalyzes the reduction of oxygen to water. Electrons originating from reduced cytochrome c in the intermembrane space (IMS) are transferred via the dinuclear copper A center (CU(A)) of subunit 2 and heme A of subunit 1 to the active site in subunit 1, a binuclear center (BNC) formed by heme A3 and copper B (CU(B)). The BNC reduces molecular oxygen to 2 water molecules using 4 electrons from cytochrome c in the IMS and 4 protons from the mitochondrial matrix. The polypeptide is Cytochrome c oxidase subunit 8A, mitochondrial (COX8A) (Carlito syrichta (Philippine tarsier)).